Consider the following 499-residue polypeptide: Bifunctional purine biosynthesis protein PurH (499 aa).

The MGS-like domain occupies 1-144 (MIKRALISVF…KNFQDVVVLT (144 aa)).

It belongs to the PurH family.

The enzyme catalyses (6R)-10-formyltetrahydrofolate + 5-amino-1-(5-phospho-beta-D-ribosyl)imidazole-4-carboxamide = 5-formamido-1-(5-phospho-D-ribosyl)imidazole-4-carboxamide + (6S)-5,6,7,8-tetrahydrofolate. It carries out the reaction IMP + H2O = 5-formamido-1-(5-phospho-D-ribosyl)imidazole-4-carboxamide. Its pathway is purine metabolism; IMP biosynthesis via de novo pathway; 5-formamido-1-(5-phospho-D-ribosyl)imidazole-4-carboxamide from 5-amino-1-(5-phospho-D-ribosyl)imidazole-4-carboxamide (10-formyl THF route): step 1/1. It participates in purine metabolism; IMP biosynthesis via de novo pathway; IMP from 5-formamido-1-(5-phospho-D-ribosyl)imidazole-4-carboxamide: step 1/1. This chain is Bifunctional purine biosynthesis protein PurH, found in Clostridium acetobutylicum (strain ATCC 824 / DSM 792 / JCM 1419 / IAM 19013 / LMG 5710 / NBRC 13948 / NRRL B-527 / VKM B-1787 / 2291 / W).